Consider the following 226-residue polypeptide: Gap junction beta-2 protein (226 aa).

The stretch at 2 to 13 (DWSALQTILGGV) is an intramembrane region. Topologically, residues 14-20 (NKHSTSI) are cytoplasmic. Residues 21–40 (GKIWLTVLFIFRIMILVVAA) traverse the membrane as a helical segment. Over 41–73 (KEVWGDEQADFVCNTLQPGCKNVCYDHYFPISH) the chain is Extracellular. Ca(2+)-binding residues include glutamate 42, glycine 45, and glutamate 47. 3 cysteine pairs are disulfide-bonded: cysteine 53/cysteine 180, cysteine 60/cysteine 174, and cysteine 64/cysteine 169. Residues 74–94 (IRLWALQLIFVSTPALLVAMH) traverse the membrane as a helical segment. The Cytoplasmic portion of the chain corresponds to 95–135 (VAYYRHEKKRKFIRGEIKTEFKDIEEIKNQKVRIEGSLWWT). A helical membrane pass occupies residues 136–156 (YTGSIFFRVIFEAAFMYVFYV). The Extracellular portion of the chain corresponds to 157-189 (MYDGFAMQRLVKCNAWPCPNTVDCFVSRPTEKT). A helical transmembrane segment spans residues 190–210 (VFTVFMIAVSGICILLNVTEL). Over 211–226 (CYLLIRFCSGKSKKPV) the chain is Cytoplasmic.

The protein belongs to the connexin family. Beta-type (group I) subfamily. As to quaternary structure, a hemichannel or connexon is composed of a hexamer of connexins. A functional gap junction is formed by the apposition of two hemichannels. Forms heteromeric channels with GJB4. Interacts with CNST.

It localises to the cell membrane. It is found in the cell junction. The protein resides in the gap junction. In terms of biological role, structural component of gap junctions. Gap junctions are dodecameric channels that connect the cytoplasm of adjoining cells. They are formed by the docking of two hexameric hemichannels, one from each cell membrane. Small molecules and ions diffuse from one cell to a neighboring cell via the central pore. The sequence is that of Gap junction beta-2 protein (GJB2) from Ovis aries (Sheep).